A 417-amino-acid polypeptide reads, in one-letter code: MLTKAPRGTKDVLPSESYKWQYVENLMREICEFYGYKEIRTPGFEHTELFLRGVGESTDIVRKEMYTFNDRSGRSITLKAEGTSPAVRAFIEHGLYAETQPTKLYYITPVYRYEKPQAGRLREHHQFGVEIFGAKSASADAEVISIAMTLLKKLGLNNLELRINSVGCPVCRKNYNKVLKEFLKEHLDELCDDCKVRYEVNPLRVLDCKVESCRRVTGEAPLITDYLCDDCRNHFEELKKYLDAMGYDYIVDPRIVRGLDYYTKTAFEIISKDIGAQGTVCGGGRYDGLIEECGGPSMPGVGFGMGIERLLLTLEQNGIEIPKPEGPDLFIAYIGDEAKLFTFTLANKLRFNGLKVEIDHMERSLKAQMKYANKLNAKFAVVIGEEELESKKVKLKNMATGEETEILIDEIEKAIKN.

This sequence belongs to the class-II aminoacyl-tRNA synthetase family. In terms of assembly, homodimer.

Its subcellular location is the cytoplasm. The enzyme catalyses tRNA(His) + L-histidine + ATP = L-histidyl-tRNA(His) + AMP + diphosphate + H(+). The chain is Histidine--tRNA ligase from Caldanaerobacter subterraneus subsp. tengcongensis (strain DSM 15242 / JCM 11007 / NBRC 100824 / MB4) (Thermoanaerobacter tengcongensis).